The following is a 338-amino-acid chain: Lipoyl synthase (338 aa).

The disordered stretch occupies residues 1-22 (MTTVQEAVPNLIPTQDVTPRPA). The [4Fe-4S] cluster site is built by Cys-84, Cys-89, Cys-95, Cys-110, Cys-114, Cys-117, and Ser-324. Positions 96–313 (FSGGTATFMI…AEEGYKMGFK (218 aa)) constitute a Radical SAM core domain.

This sequence belongs to the radical SAM superfamily. Lipoyl synthase family. It depends on [4Fe-4S] cluster as a cofactor.

It localises to the cytoplasm. The catalysed reaction is [[Fe-S] cluster scaffold protein carrying a second [4Fe-4S](2+) cluster] + N(6)-octanoyl-L-lysyl-[protein] + 2 oxidized [2Fe-2S]-[ferredoxin] + 2 S-adenosyl-L-methionine + 4 H(+) = [[Fe-S] cluster scaffold protein] + N(6)-[(R)-dihydrolipoyl]-L-lysyl-[protein] + 4 Fe(3+) + 2 hydrogen sulfide + 2 5'-deoxyadenosine + 2 L-methionine + 2 reduced [2Fe-2S]-[ferredoxin]. It functions in the pathway protein modification; protein lipoylation via endogenous pathway; protein N(6)-(lipoyl)lysine from octanoyl-[acyl-carrier-protein]: step 2/2. Catalyzes the radical-mediated insertion of two sulfur atoms into the C-6 and C-8 positions of the octanoyl moiety bound to the lipoyl domains of lipoate-dependent enzymes, thereby converting the octanoylated domains into lipoylated derivatives. This Pseudomonas entomophila (strain L48) protein is Lipoyl synthase.